The sequence spans 210 residues: Mitochondrial cardiolipin hydrolase (210 aa).

Residues 1–5 (MLLWG) lie on the Mitochondrial intermembrane side of the membrane. The chain crosses the membrane as a helical span at residues 6 to 24 (RWKLAAGLAGLALSLELFY). Residues 25–210 (RYMRRRKPLR…YNFFPEKENK (186 aa)) lie on the Cytoplasmic side of the membrane. The PLD phosphodiesterase domain maps to 138–165 (SSGYMHHKFAVVDGTVVLTGSLNWTVQA). Residues His143, Lys145, and Asp150 contribute to the active site.

Belongs to the phospholipase D family. MitoPLD/Zucchini subfamily. In terms of assembly, homodimer.

Its subcellular location is the mitochondrion outer membrane. It carries out the reaction a cardiolipin + H2O = a 1,2-diacyl-sn-glycero-3-phospho-(1'-sn-glycerol) + a 1,2-diacyl-sn-glycero-3-phosphate + H(+). In terms of biological role, presents phospholipase and nuclease activities, depending on the different physiological conditions. Plays a key role in mitochondrial fusion and fission via its phospholipase activity. In its phospholipase role, it uses the mitochondrial lipid cardiolipin as substrate to generate phosphatidate (PA or 1,2-diacyl-sn-glycero-3-phosphate), a second messenger signaling lipid. Production of PA facilitates Mitofusin-mediated fusion, whereas the cleavage of PA by the Lipin family of phosphatases produces diacylgycerol (DAG) which promotes mitochondrial fission. Regulates mitochondrial shape through facilitating mitochondrial fusion. During spermatogenesis, plays a critical role in PIWI-interacting RNA (piRNA) biogenesis. piRNAs provide essential protection against the activity of mobile genetic elements. piRNA-mediated transposon silencing is thus critical for maintaining genome stability, in particular in germline cells when transposons are mobilized as a consequence of wide-spread genomic demethylation. Has been shown to be a backbone-non-specific, single strand-specific nuclease, cleaving either RNA or DNA substrates with similar affinity. Produces 5' phosphate and 3' hydroxyl termini, suggesting it could directly participate in the processing of primary piRNA transcripts. Has been proposed to act as a cardiolipin hydrolase to generate phosphatidic acid at mitochondrial surface. Although it cannot be excluded that it can act as a phospholipase in some circumstances, this activity could not be confirmed. The polypeptide is Mitochondrial cardiolipin hydrolase (pld6) (Xenopus laevis (African clawed frog)).